We begin with the raw amino-acid sequence, 440 residues long: 3-phosphoshikimate 1-carboxyvinyltransferase (440 aa).

Residues lysine 28, serine 29, and arginine 33 each contribute to the 3-phosphoshikimate site. Lysine 28 contributes to the phosphoenolpyruvate binding site. Phosphoenolpyruvate is bound by residues glycine 98 and arginine 126. The 3-phosphoshikimate site is built by serine 171, glutamine 173, aspartate 318, and lysine 345. Position 173 (glutamine 173) interacts with phosphoenolpyruvate. Residue aspartate 318 is the Proton acceptor of the active site. Phosphoenolpyruvate is bound by residues arginine 349 and arginine 391.

The protein belongs to the EPSP synthase family. In terms of assembly, monomer.

It localises to the cytoplasm. The catalysed reaction is 3-phosphoshikimate + phosphoenolpyruvate = 5-O-(1-carboxyvinyl)-3-phosphoshikimate + phosphate. The protein operates within metabolic intermediate biosynthesis; chorismate biosynthesis; chorismate from D-erythrose 4-phosphate and phosphoenolpyruvate: step 6/7. Functionally, catalyzes the transfer of the enolpyruvyl moiety of phosphoenolpyruvate (PEP) to the 5-hydroxyl of shikimate-3-phosphate (S3P) to produce enolpyruvyl shikimate-3-phosphate and inorganic phosphate. The chain is 3-phosphoshikimate 1-carboxyvinyltransferase from Anaeromyxobacter dehalogenans (strain 2CP-C).